Here is a 91-residue protein sequence, read N- to C-terminus: Salivary lectin pathway inhibitor (91 aa).

Residues 1 to 21 form the signal peptide; sequence MGLTETTLVLVSLAFFASAVA. 2 N-linked (GlcNAc...) asparagine glycosylation sites follow: N26 and N87.

This sequence belongs to the salp14 family. In terms of processing, glycosylated; deglycosylation largely abrogates the complement inhibitory effect. Nymph salivary gland (at protein level). Saliva (at protein level). Not detected in midgut.

It localises to the secreted. Functionally, inhibits the lectin pathway of complement system activation in the host by reducing binding of mannose-binding lectin and L-ficolin to their ligands. Does not affect the classical and alternative pathways of complement system activation in the host. (Microbial infection) Protects Borrelia garinii (strain A87S) from host complement-mediated killing by preventing deposition of host C5b-9 membrane attack complexes on the surface of spirochetes. Inhibits phagocytosis of B.garinii (strain A87S) by human neutrophils. Impairs Borrelia-induced complement-mediated chemotaxis of human polymorphonuclear leukocytes. In terms of biological role, (Microbial infection) Protects Borrelia burgdorferi (strain N40), which is resistant to normal human serum, from Borrelia-opsonizing antibody-mediated complement-dependent killing. The polypeptide is Salivary lectin pathway inhibitor (Ixodes scapularis (Black-legged tick)).